Here is a 573-residue protein sequence, read N- to C-terminus: Sulfite reductase [NADPH] hemoprotein beta-component (573 aa).

[4Fe-4S] cluster is bound by residues Cys438, Cys444, Cys483, and Cys487. Position 487 (Cys487) interacts with siroheme.

It belongs to the nitrite and sulfite reductase 4Fe-4S domain family. As to quaternary structure, alpha(8)-beta(8). The alpha component is a flavoprotein, the beta component is a hemoprotein. The cofactor is siroheme. It depends on [4Fe-4S] cluster as a cofactor.

It carries out the reaction hydrogen sulfide + 3 NADP(+) + 3 H2O = sulfite + 3 NADPH + 4 H(+). It functions in the pathway sulfur metabolism; hydrogen sulfide biosynthesis; hydrogen sulfide from sulfite (NADPH route): step 1/1. Functionally, component of the sulfite reductase complex that catalyzes the 6-electron reduction of sulfite to sulfide. This is one of several activities required for the biosynthesis of L-cysteine from sulfate. The sequence is that of Sulfite reductase [NADPH] hemoprotein beta-component from Staphylococcus haemolyticus (strain JCSC1435).